The sequence spans 473 residues: Photosystem II CP43 reaction center protein (473 aa).

Residues methionine 1–glutamate 14 constitute a propeptide that is removed on maturation. The residue at position 15 (threonine 15) is an N-acetylthreonine. The residue at position 15 (threonine 15) is a Phosphothreonine. Helical transmembrane passes span leucine 69–alanine 93, leucine 134–asparagine 155, lysine 178–threonine 200, lysine 255–serine 275, and tryptophan 291–alanine 312. [CaMn4O5] cluster is bound at residue glutamate 367. A helical membrane pass occupies residues arginine 447 to proline 471.

It belongs to the PsbB/PsbC family. PsbC subfamily. In terms of assembly, PSII is composed of 1 copy each of membrane proteins PsbA, PsbB, PsbC, PsbD, PsbE, PsbF, PsbH, PsbI, PsbJ, PsbK, PsbL, PsbM, PsbT, PsbX, PsbY, PsbZ, Psb30/Ycf12, at least 3 peripheral proteins of the oxygen-evolving complex and a large number of cofactors. It forms dimeric complexes. The cofactor is Binds multiple chlorophylls and provides some of the ligands for the Ca-4Mn-5O cluster of the oxygen-evolving complex. It may also provide a ligand for a Cl- that is required for oxygen evolution. PSII binds additional chlorophylls, carotenoids and specific lipids..

Its subcellular location is the plastid. The protein localises to the chloroplast thylakoid membrane. In terms of biological role, one of the components of the core complex of photosystem II (PSII). It binds chlorophyll and helps catalyze the primary light-induced photochemical processes of PSII. PSII is a light-driven water:plastoquinone oxidoreductase, using light energy to abstract electrons from H(2)O, generating O(2) and a proton gradient subsequently used for ATP formation. The protein is Photosystem II CP43 reaction center protein of Phaseolus vulgaris (Kidney bean).